A 313-amino-acid polypeptide reads, in one-letter code: Monoglyceride lipase (313 aa).

Positions 121–125 (GHSMG) match the GXSXG motif. The active-site Nucleophile is Ser123. Catalysis depends on charge relay system residues Asp251 and His281.

The protein belongs to the AB hydrolase superfamily. Monoacylglycerol lipase family.

It is found in the lipid droplet. Its subcellular location is the cytoplasm. The protein resides in the endoplasmic reticulum. The protein localises to the mitochondrion outer membrane. The enzyme catalyses Hydrolyzes glycerol monoesters of long-chain fatty acids.. It catalyses the reaction a fatty acid ethyl ester + H2O = ethanol + a fatty acid + H(+). The catalysed reaction is 1-(9Z-octadecenoyl)-glycerol + H2O = glycerol + (9Z)-octadecenoate + H(+). It carries out the reaction 2-(9Z-octadecenoyl)-glycerol + H2O = glycerol + (9Z)-octadecenoate + H(+). The enzyme catalyses 1-hexadecanoylglycerol + H2O = glycerol + hexadecanoate + H(+). It catalyses the reaction 2-hexadecanoylglycerol + H2O = glycerol + hexadecanoate + H(+). The catalysed reaction is ethyl hexadecanoate + H2O = ethanol + hexadecanoate + H(+). It carries out the reaction ethyl (9Z)-octadecenoate + H2O = ethanol + (9Z)-octadecenoate + H(+). The enzyme catalyses ethyl (9Z)-hexadecenoate + H2O = (9Z)-hexadecenoate + ethanol + H(+). It catalyses the reaction ethyl octadecanoate + H2O = ethanol + octadecanoate + H(+). Its pathway is glycerolipid metabolism; triacylglycerol degradation. Converts monoacylglycerides (MAG) to free fatty acids and glycerol. Has a strong preference for monounsaturated monoglycerides. Required for efficient degradation of MAG, short-lived intermediates of glycerolipid metabolism which may also function as lipid signaling molecules. Controls inactivation of the signaling lipid N-palmitoylethanolamine (PEA). Involved in fatty acid ethyl ester (FAEE) catabolism. FAEEs are non-oxidative metabolites of ethanol that are transiently incorporated into lipid droplets (LDs). Their mobilization by LD-resident FAEE hydrolases facilitates a controlled metabolism of these potentially toxic lipid metabolites. This is Monoglyceride lipase (YJU3) from Saccharomyces cerevisiae (strain ATCC 204508 / S288c) (Baker's yeast).